Consider the following 661-residue polypeptide: UvrABC system protein B (661 aa).

The 156-residue stretch at 26–181 (KGIQEGRKHQ…LLRKLVDIQY (156 aa)) folds into the Helicase ATP-binding domain. 39–46 (GATGTGKT) is a binding site for ATP. The Beta-hairpin signature appears at 92–115 (YYDYYQPEAYVPQTDTFIEKDASI). The region spanning 430–596 (QIDDLIGEIQ…TINKEIRDVI (167 aa)) is the Helicase C-terminal domain. In terms of domain architecture, UVR spans 625–660 (QKVVEQMEHEMKEAARALDFERAAELRDLLLELKAE).

This sequence belongs to the UvrB family. In terms of assembly, forms a heterotetramer with UvrA during the search for lesions. Interacts with UvrC in an incision complex.

Its subcellular location is the cytoplasm. Its function is as follows. The UvrABC repair system catalyzes the recognition and processing of DNA lesions. A damage recognition complex composed of 2 UvrA and 2 UvrB subunits scans DNA for abnormalities. Upon binding of the UvrA(2)B(2) complex to a putative damaged site, the DNA wraps around one UvrB monomer. DNA wrap is dependent on ATP binding by UvrB and probably causes local melting of the DNA helix, facilitating insertion of UvrB beta-hairpin between the DNA strands. Then UvrB probes one DNA strand for the presence of a lesion. If a lesion is found the UvrA subunits dissociate and the UvrB-DNA preincision complex is formed. This complex is subsequently bound by UvrC and the second UvrB is released. If no lesion is found, the DNA wraps around the other UvrB subunit that will check the other stand for damage. This is UvrABC system protein B from Bacillus velezensis (strain DSM 23117 / BGSC 10A6 / LMG 26770 / FZB42) (Bacillus amyloliquefaciens subsp. plantarum).